The sequence spans 254 residues: Alcohol dehydrogenase (254 aa).

10–33 (FVAGLGGIGLDTSREIVKSGPKNL) is a binding site for NAD(+). S138 provides a ligand contact to substrate. The active-site Proton acceptor is the Y151.

This sequence belongs to the short-chain dehydrogenases/reductases (SDR) family. In terms of assembly, homodimer.

The enzyme catalyses a primary alcohol + NAD(+) = an aldehyde + NADH + H(+). It carries out the reaction a secondary alcohol + NAD(+) = a ketone + NADH + H(+). This Drosophila flavomontana (Fruit fly) protein is Alcohol dehydrogenase (Adh).